The primary structure comprises 223 residues: Endonuclease V (223 aa).

2 residues coordinate Mg(2+): Asp35 and Asp103.

This sequence belongs to the endonuclease V family. Requires Mg(2+) as cofactor.

It is found in the cytoplasm. It carries out the reaction Endonucleolytic cleavage at apurinic or apyrimidinic sites to products with a 5'-phosphate.. In terms of biological role, DNA repair enzyme involved in the repair of deaminated bases. Selectively cleaves double-stranded DNA at the second phosphodiester bond 3' to a deoxyinosine leaving behind the intact lesion on the nicked DNA. The polypeptide is Endonuclease V (Salmonella paratyphi A (strain ATCC 9150 / SARB42)).